The sequence spans 194 residues: MQESHFFAHLARMKLIQRWPLMRSISSENISEHSLQVAFVAHALAVIKNKKFGGTLNPERIALLAMYHDTSEVLTGDLPTPIKYFNPEIAKEYKKIEAAAERRLLDMLPEELRDDFRPFLISNTADPDESAIVKQADAICAYLKCLEELSAGNHEYAQAKKRLDVTLRERHSEEMAYFLQTFAPSFELTLDEIS.

Substrate-binding positions include 18-19 and histidine 33; that span reads RW. An HD domain is found at 30–142; it reads ISEHSLQVAF…VKQADAICAY (113 aa). Positions 33, 68, and 69 each coordinate a divalent metal cation. Substrate-binding positions include aspartate 69, 77 to 80, and aspartate 137; that span reads DLPT. Residue aspartate 137 participates in a divalent metal cation binding.

It belongs to the 5DNU family. In terms of assembly, homodimer. A divalent metal cation is required as a cofactor.

The protein localises to the cytoplasm. The catalysed reaction is a 2'-deoxyribonucleoside 5'-phosphate + H2O = a 2'-deoxyribonucleoside + phosphate. In terms of biological role, catalyzes the strictly specific dephosphorylation of 2'-deoxyribonucleoside 5'-monophosphates. This is 5'-deoxynucleotidase VC_1978 from Vibrio cholerae serotype O1 (strain ATCC 39315 / El Tor Inaba N16961).